The sequence spans 329 residues: 3-dehydroquinate synthase (329 aa).

This sequence belongs to the archaeal-type DHQ synthase family.

It carries out the reaction 2-amino-2,3,7-trideoxy-D-lyxo-hept-6-ulosonate + NAD(+) + H2O = 3-dehydroquinate + NH4(+) + NADH + H(+). In terms of biological role, catalyzes the oxidative deamination and cyclization of 2-amino-3,7-dideoxy-D-threo-hept-6-ulosonic acid (ADH) to yield 3-dehydroquinate (DHQ), which is fed into the canonical shikimic pathway of aromatic amino acid biosynthesis. This Methanoregula boonei (strain DSM 21154 / JCM 14090 / 6A8) protein is 3-dehydroquinate synthase.